We begin with the raw amino-acid sequence, 193 residues long: Selenoprotein S A (193 aa).

The helical transmembrane segment at 29–49 threads the bilayer; it reads WALASYGWYILFGCIILYFLI. Positions 114 to 125 are enriched in basic and acidic residues; the sequence is IETWDRMQEGKS. Residues 114 to 193 are disordered; sequence IETWDRMQEG…RRGPSSGGUG (80 aa). The span at 137 to 153 shows a compositional bias: low complexity; the sequence is SPSTSASSSPSTSSSAP. Position 192 (selenocysteine 192) is a non-standard amino acid, selenocysteine.

This sequence belongs to the selenoprotein S family.

The protein localises to the endoplasmic reticulum membrane. It is found in the cytoplasm. In terms of biological role, involved in the degradation process of misfolded endoplasmic reticulum (ER) luminal proteins. Participates in the transfer of misfolded proteins from the ER to the cytosol, where they are destroyed by the proteasome in a ubiquitin-dependent manner. This chain is Selenoprotein S A (vimp-a), found in Xenopus laevis (African clawed frog).